We begin with the raw amino-acid sequence, 365 residues long: MRPQDSTGVAELQEPGLPLTDDAPPGATEEPAAAEAAGAPDRGRCWLCLSSPCCSRTEPEAKKKAPCPGLGLFYTLLSAFLFSVGSLFVKKVQDVHAVEISAFRCVFQMLVVIPCLIYRKTGFIGPKGQRIFLILRGVLGSTAMMLIYYAYQTMSLADATVITFSSPVFTSIFAWICLKEKYSPWDALFTVFTITGVILIVRPPFLFGSDTSGMEESYSGHLKGTFAAIGSAVFAASTLVILRKMGKSVDYFLSIWYYVVLGLVESVIILSVLGEWSLPYCGLDRLFLIFIGLFGLGGQIFITKALQIEKAGPVAIMKTMDVVFAFIFQIIFFNNVPTWWTVGGALCVVASNVGAAIRKWYQSSK.

The interval 1–33 (MRPQDSTGVAELQEPGLPLTDDAPPGATEEPAA) is disordered. Low complexity predominate over residues 23–33 (APPGATEEPAA). 10 helical membrane-spanning segments follow: residues 69 to 89 (GLGL…SLFV), 97 to 117 (AVEI…PCLI), 131 to 151 (IFLI…YYAY), 156 to 176 (LADA…FAWI), 187 to 207 (ALFT…PFLF), 222 to 242 (LKGT…LVIL), 252 to 272 (FLSI…ILSV), 286 to 306 (LFLI…TKAL), 311 to 333 (AGPV…IIFF), and 338 to 357 (TWWT…GAAI). EamA domains are found at residues 80–202 (FLFS…LIVR) and 233–357 (VFAA…GAAI).

Belongs to the TMEM20 family. In terms of assembly, interacts with STIM1; stimulated by depletion of intracellular calcium. Interacts with ORAI1. Interacts with the plasma membrane calcium-transporting ATPases ATP2B1 and ATP2B4. Interacts with ATP1A1, ATP2A2, KPNB1 and XPO1. As to expression, ubiquitously expressed.

Its subcellular location is the cell membrane. The protein localises to the endoplasmic reticulum membrane. Its function is as follows. May play a role in intracellular calcium sensing and homeostasis. May act as a negative regulator of plasma membrane calcium-transporting ATPases preventing calcium efflux from the cell. The protein is Solute carrier family 35 member G1 (SLC35G1) of Homo sapiens (Human).